Here is a 296-residue protein sequence, read N- to C-terminus: Tubulin polyglutamylase complex subunit 2 (296 aa).

The segment covering Ser-254 to Gly-265 has biased composition (basic residues). Residues Ser-254 to Lys-296 form a disordered region. Low complexity predominate over residues Lys-285 to Lys-296.

Part of the neuronal tubulin polyglutamylase complex which contains TPGS1, TPGS2, TTLL1, LRRC49 and NICN1. Interacts with CSTPP1 and LRRC49.

It is found in the cytoplasm. Its subcellular location is the cytoskeleton. The protein localises to the microtubule organizing center. It localises to the centrosome. The protein resides in the centriolar satellite. Its function is as follows. Subunit of the tubulin polyglutamylase complex (TPGC). The complex mediates cilia and flagella polyglutamylation which is essential for their biogenesis and motility. This is Tubulin polyglutamylase complex subunit 2 (Tpgs2) from Mus musculus (Mouse).